The primary structure comprises 284 residues: Probable endonuclease 4 (284 aa).

Zn(2+)-binding residues include His-69, His-109, Glu-145, Asp-179, His-182, His-216, Asp-229, His-231, and Glu-261.

This sequence belongs to the AP endonuclease 2 family. The cofactor is Zn(2+).

The catalysed reaction is Endonucleolytic cleavage to 5'-phosphooligonucleotide end-products.. Functionally, endonuclease IV plays a role in DNA repair. It cleaves phosphodiester bonds at apurinic or apyrimidinic (AP) sites, generating a 3'-hydroxyl group and a 5'-terminal sugar phosphate. The sequence is that of Probable endonuclease 4 from Klebsiella pneumoniae (strain 342).